The primary structure comprises 91 residues: Small ribosomal subunit protein uS19 (91 aa).

The protein belongs to the universal ribosomal protein uS19 family.

Protein S19 forms a complex with S13 that binds strongly to the 16S ribosomal RNA. The polypeptide is Small ribosomal subunit protein uS19 (Methylibium petroleiphilum (strain ATCC BAA-1232 / LMG 22953 / PM1)).